We begin with the raw amino-acid sequence, 935 residues long: Inter-alpha-trypsin inhibitor heavy chain H2 (935 aa).

The signal sequence occupies residues 1–18; the sequence is MKGLTCFLLCFLLSEAQG. Residues 19–53 constitute a propeptide that is removed on maturation; that stretch reads FEIPTNGLSEFAEYGDLAELALGKFHVVPGNRRSQ. One can recognise a VIT domain in the interval 45–174; sequence VVPGNRRSQE…KVQFELHYQE (130 aa). N107 carries N-linked (GlcNAc...) asparagine glycosylation. At E271 the chain carries 4-carboxyglutamate. One can recognise a VWFA domain in the interval 297–457; it reads PKNILFVIDV…YDFLKRLSND (161 aa). N434 carries N-linked (GlcNAc...) asparagine glycosylation. S455 carries the phosphoserine modification. Aspartate 1-(chondroitin 4-sulfate)-ester is present on D691. The propeptide occupies 692–935; that stretch reads PHFIIYLPRS…PLLYSFLKRP (244 aa). Position 875 is a phosphoserine (S875).

This sequence belongs to the ITIH family. As to quaternary structure, I-alpha-I plasma protease inhibitors are assembled from one or two heavy chains (HC) and one light chain, bikunin. Inter-alpha-inhibitor (I-alpha-I) is composed of ITIH1/HC1, ITIH2/HC2 and bikunin. Heavy chains are linked to bikunin via chondroitin 4-sulfate esterified to the alpha-carboxyl of the C-terminal aspartate after propeptide cleavage. In terms of processing, phosphorylated by FAM20C in the extracellular medium.

It is found in the secreted. May act as a carrier of hyaluronan in serum or as a binding protein between hyaluronan and other matrix protein, including those on cell surfaces in tissues to regulate the localization, synthesis and degradation of hyaluronan which are essential to cells undergoing biological processes. The protein is Inter-alpha-trypsin inhibitor heavy chain H2 (ITIH2) of Sus scrofa (Pig).